A 374-amino-acid chain; its full sequence is UPF0754 membrane protein NWMN_1738 (374 aa).

2 helical membrane-spanning segments follow: residues 4–24 (LFIIIFMIVVGAIIGGITNVI) and 354–374 (SLGFILGGIIGFFQGLVAIFV).

This sequence belongs to the UPF0754 family.

Its subcellular location is the cell membrane. This chain is UPF0754 membrane protein NWMN_1738, found in Staphylococcus aureus (strain Newman).